Here is a 336-residue protein sequence, read N- to C-terminus: Anthranilate phosphoribosyltransferase (336 aa).

5-phospho-alpha-D-ribose 1-diphosphate-binding positions include Gly-78, 81 to 82 (GD), Thr-86, 88 to 91 (NVST), 106 to 114 (KHGNYSVSS), and Ser-118. Gly-78 contributes to the anthranilate binding site. Residue Ser-90 participates in Mg(2+) binding. Residue Asn-109 coordinates anthranilate. Residue Arg-164 participates in anthranilate binding. Mg(2+)-binding residues include Asp-222 and Glu-223.

It belongs to the anthranilate phosphoribosyltransferase family. As to quaternary structure, homodimer. Mg(2+) is required as a cofactor.

The catalysed reaction is N-(5-phospho-beta-D-ribosyl)anthranilate + diphosphate = 5-phospho-alpha-D-ribose 1-diphosphate + anthranilate. The protein operates within amino-acid biosynthesis; L-tryptophan biosynthesis; L-tryptophan from chorismate: step 2/5. In terms of biological role, catalyzes the transfer of the phosphoribosyl group of 5-phosphorylribose-1-pyrophosphate (PRPP) to anthranilate to yield N-(5'-phosphoribosyl)-anthranilate (PRA). This chain is Anthranilate phosphoribosyltransferase, found in Halobacterium salinarum (strain ATCC 29341 / DSM 671 / R1).